Here is a 466-residue protein sequence, read N- to C-terminus: UDP-N-acetylmuramoylalanine--D-glutamate ligase (466 aa).

115-121 (GTDGKTT) lines the ATP pocket.

Belongs to the MurCDEF family.

It is found in the cytoplasm. The enzyme catalyses UDP-N-acetyl-alpha-D-muramoyl-L-alanine + D-glutamate + ATP = UDP-N-acetyl-alpha-D-muramoyl-L-alanyl-D-glutamate + ADP + phosphate + H(+). It functions in the pathway cell wall biogenesis; peptidoglycan biosynthesis. In terms of biological role, cell wall formation. Catalyzes the addition of glutamate to the nucleotide precursor UDP-N-acetylmuramoyl-L-alanine (UMA). This chain is UDP-N-acetylmuramoylalanine--D-glutamate ligase, found in Chlorobium phaeobacteroides (strain BS1).